Here is a 221-residue protein sequence, read N- to C-terminus: Transcription antitermination protein NusB (221 aa).

The protein belongs to the NusB family.

Functionally, involved in transcription antitermination. Required for transcription of ribosomal RNA (rRNA) genes. Binds specifically to the boxA antiterminator sequence of the ribosomal RNA (rrn) operons. The sequence is that of Transcription antitermination protein NusB from Synechocystis sp. (strain ATCC 27184 / PCC 6803 / Kazusa).